A 103-amino-acid polypeptide reads, in one-letter code: Large ribosomal subunit protein bL21 (103 aa).

The protein belongs to the bacterial ribosomal protein bL21 family. Part of the 50S ribosomal subunit. Contacts protein L20.

Its function is as follows. This protein binds to 23S rRNA in the presence of protein L20. This Borrelia garinii subsp. bavariensis (strain ATCC BAA-2496 / DSM 23469 / PBi) (Borreliella bavariensis) protein is Large ribosomal subunit protein bL21.